Consider the following 72-residue polypeptide: Translation initiation factor IF-1 (72 aa).

The region spanning Met-1–Lys-72 is the S1-like domain.

This sequence belongs to the IF-1 family. In terms of assembly, component of the 30S ribosomal translation pre-initiation complex which assembles on the 30S ribosome in the order IF-2 and IF-3, IF-1 and N-formylmethionyl-tRNA(fMet); mRNA recruitment can occur at any time during PIC assembly.

It is found in the cytoplasm. In terms of biological role, one of the essential components for the initiation of protein synthesis. Stabilizes the binding of IF-2 and IF-3 on the 30S subunit to which N-formylmethionyl-tRNA(fMet) subsequently binds. Helps modulate mRNA selection, yielding the 30S pre-initiation complex (PIC). Upon addition of the 50S ribosomal subunit IF-1, IF-2 and IF-3 are released leaving the mature 70S translation initiation complex. The chain is Translation initiation factor IF-1 from Clostridium beijerinckii (strain ATCC 51743 / NCIMB 8052) (Clostridium acetobutylicum).